Here is a 472-residue protein sequence, read N- to C-terminus: D-inositol 3-phosphate glycosyltransferase (472 aa).

His-48 provides a ligand contact to 1D-myo-inositol 3-phosphate. UDP-N-acetyl-alpha-D-glucosamine contacts are provided by residues 54–55 (QP) and Gly-62. Residues 59 to 64 (DAGGMN), Lys-117, Tyr-150, Thr-174, and Arg-194 each bind 1D-myo-inositol 3-phosphate. UDP-N-acetyl-alpha-D-glucosamine is bound by residues Arg-282, Lys-287, and Val-348. Mg(2+) is bound by residues Phe-357, Arg-358, and Ala-360. Residues Glu-370 and Glu-378 each contribute to the UDP-N-acetyl-alpha-D-glucosamine site. Thr-384 lines the Mg(2+) pocket.

The protein belongs to the glycosyltransferase group 1 family. MshA subfamily. Homodimer.

It carries out the reaction 1D-myo-inositol 3-phosphate + UDP-N-acetyl-alpha-D-glucosamine = 1D-myo-inositol 2-acetamido-2-deoxy-alpha-D-glucopyranoside 3-phosphate + UDP + H(+). Its function is as follows. Catalyzes the transfer of a N-acetyl-glucosamine moiety to 1D-myo-inositol 3-phosphate to produce 1D-myo-inositol 2-acetamido-2-deoxy-glucopyranoside 3-phosphate in the mycothiol biosynthesis pathway. This is D-inositol 3-phosphate glycosyltransferase from Streptomyces griseus subsp. griseus (strain JCM 4626 / CBS 651.72 / NBRC 13350 / KCC S-0626 / ISP 5235).